The primary structure comprises 369 residues: tRNA-specific 2-thiouridylase MnmA (369 aa).

ATP contacts are provided by residues 16 to 23 (AMSGGVDS) and Met42. Residue Cys110 is the Nucleophile of the active site. Cys110 and Cys206 are joined by a disulfide. An ATP-binding site is contributed by Gly134. Residues 156–158 (KDQ) form an interaction with tRNA region. Cys206 serves as the catalytic Cysteine persulfide intermediate.

Belongs to the MnmA/TRMU family.

It localises to the cytoplasm. It catalyses the reaction S-sulfanyl-L-cysteinyl-[protein] + uridine(34) in tRNA + AH2 + ATP = 2-thiouridine(34) in tRNA + L-cysteinyl-[protein] + A + AMP + diphosphate + H(+). Functionally, catalyzes the 2-thiolation of uridine at the wobble position (U34) of tRNA, leading to the formation of s(2)U34. The sequence is that of tRNA-specific 2-thiouridylase MnmA from Orientia tsutsugamushi (strain Boryong) (Rickettsia tsutsugamushi).